The chain runs to 247 residues: UPF0280 protein Mevan_0550 (247 aa).

Belongs to the UPF0280 family.

The polypeptide is UPF0280 protein Mevan_0550 (Methanococcus vannielii (strain ATCC 35089 / DSM 1224 / JCM 13029 / OCM 148 / SB)).